The primary structure comprises 388 residues: Succinate--CoA ligase [ADP-forming] subunit beta (388 aa).

The 236-residue stretch at 9–244 (KQLFAQYGLP…PAQNDAREAH (236 aa)) folds into the ATP-grasp domain. ATP is bound by residues K46, 53–55 (GRG), E99, T102, and E107. Positions 199 and 213 each coordinate Mg(2+). Residues N264 and 321–323 (GIV) each bind substrate.

The protein belongs to the succinate/malate CoA ligase beta subunit family. As to quaternary structure, heterotetramer of two alpha and two beta subunits. Mg(2+) serves as cofactor.

It carries out the reaction succinate + ATP + CoA = succinyl-CoA + ADP + phosphate. It catalyses the reaction GTP + succinate + CoA = succinyl-CoA + GDP + phosphate. It functions in the pathway carbohydrate metabolism; tricarboxylic acid cycle; succinate from succinyl-CoA (ligase route): step 1/1. Succinyl-CoA synthetase functions in the citric acid cycle (TCA), coupling the hydrolysis of succinyl-CoA to the synthesis of either ATP or GTP and thus represents the only step of substrate-level phosphorylation in the TCA. The beta subunit provides nucleotide specificity of the enzyme and binds the substrate succinate, while the binding sites for coenzyme A and phosphate are found in the alpha subunit. The chain is Succinate--CoA ligase [ADP-forming] subunit beta from Edwardsiella ictaluri (strain 93-146).